The primary structure comprises 109 residues: Flagellar hook-basal body complex protein FliE (109 aa).

The interval Met1–Gly38 is disordered. The span at Arg22 to Gly38 shows a compositional bias: basic and acidic residues.

It belongs to the FliE family.

The protein localises to the bacterial flagellum basal body. The polypeptide is Flagellar hook-basal body complex protein FliE (Helicobacter acinonychis (strain Sheeba)).